The primary structure comprises 78 residues: uncharacterized protein (78 aa).

This is an uncharacterized protein from Helicobacter pylori (strain J99 / ATCC 700824) (Campylobacter pylori J99).